The sequence spans 1040 residues: Multidrug resistance protein MdtB (1040 aa).

11 helical membrane passes run 15 to 37 (LFILRPVATTLLMIAILLAGIIG), 343 to 365 (VQFELLLAIALVVMVIYLFLRNA), 369 to 391 (LIPSIAVPLSLVGTFAAMYFLGF), 398 to 420 (LMALTIATGFVVDDAIVVIENIA), 440 to 462 (IGFTIISLTFSLIAVLIPLLFMG), 474 to 496 (VTLAVSILISAVVSLTLTPMMCA), 535 to 557 (HPWLTLSVALGTLLLTILLYIWI), 867 to 889 (VWLIVAAIVAMYIVLGVLYESFI), 909 to 931 (LMMAGKDLDVIAIIGIILLIGIV), 968 to 990 (ILMTTMAALLSALPLMLSTGVGA), and 1000 to 1022 (MVGGLIMSQILTLFTTPVIYLLF).

It belongs to the resistance-nodulation-cell division (RND) (TC 2.A.6) family. MdtB subfamily. In terms of assembly, part of a tripartite efflux system composed of MdtA, MdtB and MdtC. MdtB forms a heteromultimer with MdtC.

It is found in the cell inner membrane. This Pectobacterium atrosepticum (strain SCRI 1043 / ATCC BAA-672) (Erwinia carotovora subsp. atroseptica) protein is Multidrug resistance protein MdtB.